A 201-amino-acid polypeptide reads, in one-letter code: Imidazole glycerol phosphate synthase subunit HisH 1 (201 aa).

Positions 1–201 (MIALIDYKAG…LKLLENFIRL (201 aa)) constitute a Glutamine amidotransferase type-1 domain. C80 functions as the Nucleophile in the catalytic mechanism. Residues H183 and E185 contribute to the active site.

As to quaternary structure, heterodimer of HisH and HisF.

The protein localises to the cytoplasm. It carries out the reaction 5-[(5-phospho-1-deoxy-D-ribulos-1-ylimino)methylamino]-1-(5-phospho-beta-D-ribosyl)imidazole-4-carboxamide + L-glutamine = D-erythro-1-(imidazol-4-yl)glycerol 3-phosphate + 5-amino-1-(5-phospho-beta-D-ribosyl)imidazole-4-carboxamide + L-glutamate + H(+). The enzyme catalyses L-glutamine + H2O = L-glutamate + NH4(+). It functions in the pathway amino-acid biosynthesis; L-histidine biosynthesis; L-histidine from 5-phospho-alpha-D-ribose 1-diphosphate: step 5/9. In terms of biological role, IGPS catalyzes the conversion of PRFAR and glutamine to IGP, AICAR and glutamate. The HisH subunit provides the glutamine amidotransferase activity that produces the ammonia necessary to HisF for the synthesis of IGP and AICAR. In Campylobacter jejuni (strain RM1221), this protein is Imidazole glycerol phosphate synthase subunit HisH 1.